Here is a 355-residue protein sequence, read N- to C-terminus: Methyltransferase FUS9 (355 aa).

5 residues coordinate S-adenosyl-L-homocysteine: Y18, N63, D86, S123, and F124. F231 is a Mg(2+) binding site.

The protein belongs to the methyltransferase superfamily. Type-7 methyltransferase family. Mg(2+) is required as a cofactor.

The protein operates within mycotoxin biosynthesis. Its function is as follows. Methyltransferase; part of the gene cluster that mediates the biosynthesis of the mycotoxin fusarin C. Within the cluster, FUS1, FUS2, FUS8 and FUS9 are sufficient for fusarin production. The roles of the other FUS members are yet undetermined. The fusarin C synthetase FUS1 is responsible for the condensation of one acetyl-coenzyme A (CoA) unit with six malonyl-CoA units and the amide linkage of the arising heptaketide and homoserine, subsequently releasing the first intermediate, prefusarin, as an alcohol with an open ring structure. The cytochrome P450 monooxygenase FUS8 participates in multiple oxidation processes at carbon C-20 and is able to use the FUS1 product as substrate, resulting in formation of 20-hydroxy-prefusarin. This reaction seems to be essential before the 2-pyrrolidone ring closure can be catalyzed by FUS2, generating 20-hydroxy-fusarin. FUS8 is able to further oxidizes carbon C-20 after ring closure, resulting in the formation of carboxy-fusarin C. As the last step, FUS9 methylates the hydroxyl group at C-21 to generate fusarin C. Fusarin C can then rearrange to epi-fusarin C, the (z)-isomers, and fusarin A and fusarin D. The sequence is that of Methyltransferase FUS9 from Gibberella fujikuroi (strain CBS 195.34 / IMI 58289 / NRRL A-6831) (Bakanae and foot rot disease fungus).